The primary structure comprises 185 residues: Intraflagellar transport protein 22 homolog (185 aa).

Residues 10 to 17 (GPCESGKT), 63 to 67 (DCGGD), and 123 to 126 (HKPG) contribute to the GTP site.

This sequence belongs to the small GTPase superfamily. Rab family. Component of the IFT complex B, at least composed of IFT20, IFT22, IFT25, IFT27, IFT46, IFT52, TRAF3IP1/IFT54, IFT57, IFT74, IFT80, IFT81, and IFT88. Interacts with IFT88. Interacts with CFAP61.

Its subcellular location is the cell projection. The protein localises to the cilium. Functionally, small GTPase-like component of the intraflagellar transport (IFT) complex B. In Bos taurus (Bovine), this protein is Intraflagellar transport protein 22 homolog (IFT22).